We begin with the raw amino-acid sequence, 544 residues long: Methionine--tRNA ligase 1 (544 aa).

The 'HIGH' region signature appears at 10–20; it reads PYANGSLHLGH. The Zn(2+) site is built by Cys-141, Cys-144, Cys-153, and Cys-156. A 'KMSKS' region motif is present at residues 329–333; sequence KLSTS. An ATP-binding site is contributed by Thr-332.

Belongs to the class-I aminoacyl-tRNA synthetase family. MetG type 1 subfamily. Monomer. Zn(2+) serves as cofactor.

It is found in the cytoplasm. It catalyses the reaction tRNA(Met) + L-methionine + ATP = L-methionyl-tRNA(Met) + AMP + diphosphate. Functionally, is required not only for elongation of protein synthesis but also for the initiation of all mRNA translation through initiator tRNA(fMet) aminoacylation. The polypeptide is Methionine--tRNA ligase 1 (Bacillus cereus (strain ATCC 10987 / NRS 248)).